The sequence spans 596 residues: tRNA(Met) cytidine acetyltransferase TmcA (596 aa).

ATP-binding positions include Gln138, 160–169 (GRGKSTLAGK), and Arg285. Positions 328–481 (SDLRRLFDAQ…SGYHSAMMLY (154 aa)) constitute an N-acetyltransferase domain. Residues 406–408 (IAV) and 413–419 (QKQGIGK) each bind acetyl-CoA.

It belongs to the RNA cytidine acetyltransferase family. TmcA subfamily.

Its subcellular location is the cytoplasm. The catalysed reaction is cytidine(34) in elongator tRNA(Met) + acetyl-CoA + ATP + H2O = N(4)-acetylcytidine(34) in elongator tRNA(Met) + ADP + phosphate + CoA + H(+). Its function is as follows. Catalyzes the formation of N(4)-acetylcytidine (ac(4)C) at the wobble position of tRNA(Met), by using acetyl-CoA as an acetyl donor and ATP (or GTP). This chain is tRNA(Met) cytidine acetyltransferase TmcA, found in Actinobacillus pleuropneumoniae serotype 5b (strain L20).